A 61-amino-acid polypeptide reads, in one-letter code: Toxin S5C1 (61 aa).

Disulfide bonds link cysteine 3-cysteine 22, cysteine 16-cysteine 39, cysteine 41-cysteine 53, and cysteine 54-cysteine 59. The Cell attachment site motif lies at 45-47; it reads RGD.

This sequence belongs to the three-finger toxin family. Short-chain subfamily. Antiplatelet toxin sub-subfamily. In terms of tissue distribution, expressed by the venom gland.

The protein localises to the secreted. Functionally, inhibits ADP-induced platelet aggregation and inhibits the binding of purified platelet fibrinogen receptor alpha-IIb/beta-3 (ITGA2B/ITGB3) to immobilized fibrinogen. In Dendroaspis jamesoni kaimosae (Eastern Jameson's mamba), this protein is Toxin S5C1.